We begin with the raw amino-acid sequence, 398 residues long: Stabilizer of axonemal microtubules 2 (398 aa).

Mn regions lie at residues 114 to 126 (STTF…PQEI), 148 to 162 (ITSH…QLEL), 248 to 260 (NSTS…PYQA), 282 to 296 (KSIM…ESCR), 316 to 328 (LSTF…PHEL), and 350 to 364 (VTMY…RQEI).

This sequence belongs to the FAM154 family.

This Homo sapiens (Human) protein is Stabilizer of axonemal microtubules 2 (SAXO2).